The chain runs to 505 residues: MGTDNHSVRVSVRGIYATALTKRLLDADYEIVQASPVIRERFDIDFDTVYNTVTVTTTDDHQGVGIHGTESAVRSVADVLTSCGRDTLAWDDLTPPGVIFTAQITETQGSGAICALIPAENPDTESKTEPDLNDVHIPDESVATGYLPYDSTDKHIEQGDIMTVQSHRSMPPWDNTDQRADAVVGTTLRANGGLATLIQGHEGVTVDTYDDEDARELAGMIELIDIDLPTGWGIEVNHAATQASLTALKSGLERAIDRAEDISDGAVAEEVTSTGRWLWFGRESRFALDEIRRSVITTIHGHHRIKAAGETASAGVDLAEALCGDIGDGNVQIQHNEFPFEVVTQQFGPTEGERVELYHGKPEGHAFSLGQGEVTDWDANGTIEVTRRISGHGSGTYDELGTPRESGDTAVTRVREGRWWYPTVYRSRDGEHKGTYVNICTPIECFPKSIRYVDLHVDVVKYPDGTVERVDDDELNTAVTAGHIPPALAEKAQSVASSLERALDK.

Residues 389 to 408 (ISGHGSGTYDELGTPRESGD) form a disordered region.

The protein belongs to the FAU-1 family.

Its function is as follows. Probable RNase involved in rRNA stability through maturation and/or degradation of precursor rRNAs. Binds to RNA in loop regions with AU-rich sequences. The protein is Probable ribonuclease FAU-1 of Haloquadratum walsbyi (strain DSM 16790 / HBSQ001).